A 729-amino-acid chain; its full sequence is Catalase-peroxidase (729 aa).

Residues 1-24 (MDAKTNDGKAGQCPFTSGRGHKNR) are disordered. Positions 95 to 217 (WHSAGTYRIT…LAAVQMGLIY (123 aa)) form a cross-link, tryptophyl-tyrosyl-methioninium (Trp-Tyr) (with M-243). The Proton acceptor role is filled by His-96. The segment at residues 217-243 (YVNPEGPNGQPDPLAAAKDIRETFLRM) is a cross-link (tryptophyl-tyrosyl-methioninium (Tyr-Met) (with W-95)). His-258 provides a ligand contact to heme b.

This sequence belongs to the peroxidase family. Peroxidase/catalase subfamily. Homodimer or homotetramer. Requires heme b as cofactor. Post-translationally, formation of the three residue Trp-Tyr-Met cross-link is important for the catalase, but not the peroxidase activity of the enzyme.

The catalysed reaction is H2O2 + AH2 = A + 2 H2O. It catalyses the reaction 2 H2O2 = O2 + 2 H2O. Its function is as follows. Bifunctional enzyme with both catalase and broad-spectrum peroxidase activity. This chain is Catalase-peroxidase, found in Nitrobacter winogradskyi (strain ATCC 25391 / DSM 10237 / CIP 104748 / NCIMB 11846 / Nb-255).